A 307-amino-acid chain; its full sequence is UDP-3-O-acyl-N-acetylglucosamine deacetylase (307 aa).

Zn(2+)-binding residues include His78, His241, and Asp245. His268 functions as the Proton donor in the catalytic mechanism.

Belongs to the LpxC family. Requires Zn(2+) as cofactor.

It carries out the reaction a UDP-3-O-[(3R)-3-hydroxyacyl]-N-acetyl-alpha-D-glucosamine + H2O = a UDP-3-O-[(3R)-3-hydroxyacyl]-alpha-D-glucosamine + acetate. Its pathway is glycolipid biosynthesis; lipid IV(A) biosynthesis; lipid IV(A) from (3R)-3-hydroxytetradecanoyl-[acyl-carrier-protein] and UDP-N-acetyl-alpha-D-glucosamine: step 2/6. Its function is as follows. Catalyzes the hydrolysis of UDP-3-O-myristoyl-N-acetylglucosamine to form UDP-3-O-myristoylglucosamine and acetate, the committed step in lipid A biosynthesis. In Polaromonas naphthalenivorans (strain CJ2), this protein is UDP-3-O-acyl-N-acetylglucosamine deacetylase.